We begin with the raw amino-acid sequence, 103 residues long: UPF0235 protein Dole_0289 (103 aa).

Belongs to the UPF0235 family.

The protein is UPF0235 protein Dole_0289 of Desulfosudis oleivorans (strain DSM 6200 / JCM 39069 / Hxd3) (Desulfococcus oleovorans).